The chain runs to 186 residues: Small ribosomal subunit protein uS5 (186 aa).

One can recognise an S5 DRBM domain in the interval 20–83 (FVDKLVHINR…EAAKRDMIFV (64 aa)).

The protein belongs to the universal ribosomal protein uS5 family. As to quaternary structure, part of the 30S ribosomal subunit. Contacts proteins S4 and S8.

Its function is as follows. With S4 and S12 plays an important role in translational accuracy. In terms of biological role, located at the back of the 30S subunit body where it stabilizes the conformation of the head with respect to the body. The sequence is that of Small ribosomal subunit protein uS5 from Brucella anthropi (strain ATCC 49188 / DSM 6882 / CCUG 24695 / JCM 21032 / LMG 3331 / NBRC 15819 / NCTC 12168 / Alc 37) (Ochrobactrum anthropi).